The following is a 428-amino-acid chain: Elongation factor 1-alpha (428 aa).

A tr-type G domain is found at 5 to 217 (KPHVNIVFIG…DQIPEPEKPT (213 aa)). The segment at 14-21 (GHVDHGKS) is G1. Residue 14–21 (GHVDHGKS) coordinates GTP. Serine 21 is a binding site for Mg(2+). Residues 68–72 (GITID) are G2. A G3 region spans residues 89-92 (DAPG). GTP-binding positions include 89–93 (DAPGH) and 144–147 (NKMD). Positions 144–147 (NKMD) are G4. The interval 181–183 (SAW) is G5.

The protein belongs to the TRAFAC class translation factor GTPase superfamily. Classic translation factor GTPase family. EF-Tu/EF-1A subfamily.

It is found in the cytoplasm. The catalysed reaction is GTP + H2O = GDP + phosphate + H(+). In terms of biological role, GTP hydrolase that promotes the GTP-dependent binding of aminoacyl-tRNA to the A-site of ribosomes during protein biosynthesis. The chain is Elongation factor 1-alpha from Thermococcus sibiricus (strain DSM 12597 / MM 739).